Consider the following 1250-residue polypeptide: Protein SSD1 (1250 aa).

The span at 1 to 22 (MSKNSNVNNNRSQEPNNMFVQT) shows a compositional bias: polar residues. The segment at 1 to 32 (MSKNSNVNNNRSQEPNNMFVQTTGGGKNAPKQ) is disordered. Residue serine 2 is modified to N-acetylserine. Position 40 is a phosphoserine (serine 40). A disordered region spans residues 79–163 (TGQYLSGNSG…SSIYGHSRRH (85 aa)). A compositionally biased stretch (polar residues) spans 84-94 (SGNSGSNNHFT). Positions 124 to 145 (NNSGYYHNSYDNNNNSNNPGSN) are enriched in low complexity. Serine 164 and serine 183 each carry phosphoserine. Residues 197–208 (QADSGSNSTTEQ) show a composition bias toward polar residues. Disordered stretches follow at residues 197–338 (QADS…GGRK), 418–443 (KEKEEKKRRKDASMQHDLIPLNSSDD), and 455–517 (SNNF…DDVE). Threonine 227 is modified (phosphothreonine). Polar residues predominate over residues 264-276 (NEYSPGINSNWRN). The span at 277 to 287 (QSQQPQQQLSP) shows a compositional bias: low complexity. A phosphoserine mark is found at serine 286 and serine 322. A compositionally biased stretch (polar residues) spans 319–329 (SNSSVHSFSSQ). The segment covering 481-495 (STINNDSDSLSSPTK) has biased composition (polar residues). Residues serine 491 and serine 492 each carry the phosphoserine modification. The span at 497 to 510 (GVRRRSSLKQRPTQ) shows a compositional bias: basic residues. Positions 582–657 (AWFKPTDKKV…EIDSILRDNN (76 aa)) constitute a CSD2 domain. At tyrosine 688 the chain carries Phosphotyrosine. Residues 694–1015 (DTNEYNIFAI…VHRQLKAVIH (322 aa)) form the RNB domain. One can recognise a DIS3L2 C-terminal domain in the interval 1064–1148 (GQLLTMATVL…SIKNKFRSTA (85 aa)).

The protein belongs to the RNR ribonuclease family.

In terms of biological role, can suppress the lethality due to deletion of SIT4, and partially the defects due to BCY1 disruption. Is implicated in the control of the cell cycle G1 phase. The protein is Protein SSD1 (SSD1) of Saccharomyces cerevisiae (strain ATCC 204508 / S288c) (Baker's yeast).